The chain runs to 392 residues: Rhizopuspepsin-5 (392 aa).

The signal sequence occupies residues 1 to 21; the sequence is MKFSLISSCVALAVLVLSTEA. Residues 22-69 constitute a propeptide, activation peptide; the sequence is APNGKKVNIPLTKNKDYKPNAKNAIQKVLAKYHRHRSTSSSSNSTSTD. Residues 85-389 enclose the Peptidase A1 domain; that stretch reads YFGQVKVGTP…NPTVPQVQIA (305 aa). Asp103 is an active-site residue. Cys116 and Cys119 are joined by a disulfide. The active site involves Asp286. Cys320 and Cys353 form a disulfide bridge.

Belongs to the peptidase A1 family.

The enzyme catalyses Hydrolysis of proteins with broad specificity similar to that of pepsin A, preferring hydrophobic residues at P1 and P1'. Clots milk and activates trypsinogen. Does not cleave 4-Gln-|-His-5, but does cleave 10-His-|-Leu-11 and 12-Val-|-Glu-13 in B chain of insulin.. The chain is Rhizopuspepsin-5 from Rhizopus niveus.